The sequence spans 85 residues: UPF0386 protein RHECIAT_CH0001945 (85 aa).

The protein belongs to the UPF0386 family.

This is UPF0386 protein RHECIAT_CH0001945 from Rhizobium etli (strain CIAT 652).